A 383-amino-acid polypeptide reads, in one-letter code: Trichodiene synthase (383 aa).

The protein belongs to the trichodiene synthase family.

It catalyses the reaction (2E,6E)-farnesyl diphosphate = trichodiene + diphosphate. It participates in sesquiterpene biosynthesis; trichothecene biosynthesis. Functionally, TS is a member of the terpene cyclase group of enzymes. It catalyzes the isomerization and cyclization of farnesyl pyro-phosphate to form trichodiene, the first cyclic intermediate in the biosynthetic pathway for trichothecenes. It serves to branch trichothecene biosynthesis from the isoprenoid pathway. The protein is Trichodiene synthase (TRI5) of Stachybotrys chartarum (Toxic black mold).